The primary structure comprises 570 residues: 2-isopropylmalate synthase (570 aa).

The 275-residue stretch at 31 to 305 (PIWMSTDLRD…DPELDFSHIN (275 aa)) folds into the Pyruvate carboxyltransferase domain. Mg(2+) contacts are provided by Asp-40, His-244, His-246, and Asn-280. Positions 437–570 (SDGAIGYVSH…RRSSAQATVA (134 aa)) are regulatory domain.

The protein belongs to the alpha-IPM synthase/homocitrate synthase family. LeuA type 2 subfamily. In terms of assembly, homodimer. The cofactor is Mg(2+).

It is found in the cytoplasm. The catalysed reaction is 3-methyl-2-oxobutanoate + acetyl-CoA + H2O = (2S)-2-isopropylmalate + CoA + H(+). It participates in amino-acid biosynthesis; L-leucine biosynthesis; L-leucine from 3-methyl-2-oxobutanoate: step 1/4. In terms of biological role, catalyzes the condensation of the acetyl group of acetyl-CoA with 3-methyl-2-oxobutanoate (2-ketoisovalerate) to form 3-carboxy-3-hydroxy-4-methylpentanoate (2-isopropylmalate). The chain is 2-isopropylmalate synthase from Ralstonia pickettii (strain 12J).